A 129-amino-acid polypeptide reads, in one-letter code: Small ribosomal subunit protein uS11 (129 aa).

Belongs to the universal ribosomal protein uS11 family. Part of the 30S ribosomal subunit. Interacts with proteins S7 and S18. Binds to IF-3.

Functionally, located on the platform of the 30S subunit, it bridges several disparate RNA helices of the 16S rRNA. Forms part of the Shine-Dalgarno cleft in the 70S ribosome. The chain is Small ribosomal subunit protein uS11 from Brucella abortus (strain S19).